A 933-amino-acid polypeptide reads, in one-letter code: C-1-tetrahydrofolate synthase, cytoplasmic (933 aa).

A methylenetetrahydrofolate dehydrogenase and cyclohydrolase region spans residues 1–303 (MWEPQGSLDP…DRLLAPTWPL (303 aa)). Substrate is bound by residues 51 to 55 (YIRMK) and 98 to 100 (VQM). NADP(+) contacts are provided by residues 170 to 172 (GRS) and Ser-195. 270 to 274 (PGGVG) contributes to the substrate binding site. Residues 304–933 (RPLRITPLSP…TKTGEIEGLF (630 aa)) are formyltetrahydrofolate synthetase. 378–385 (TPLGEGKS) is an ATP binding site.

The protein in the N-terminal section; belongs to the tetrahydrofolate dehydrogenase/cyclohydrolase family. This sequence in the C-terminal section; belongs to the formate--tetrahydrofolate ligase family. Homodimer.

It localises to the cytoplasm. It carries out the reaction (6R)-5,10-methylene-5,6,7,8-tetrahydrofolate + NADP(+) = (6R)-5,10-methenyltetrahydrofolate + NADPH. The catalysed reaction is (6R)-5,10-methenyltetrahydrofolate + H2O = (6R)-10-formyltetrahydrofolate + H(+). It catalyses the reaction (6S)-5,6,7,8-tetrahydrofolate + formate + ATP = (6R)-10-formyltetrahydrofolate + ADP + phosphate. It functions in the pathway one-carbon metabolism; tetrahydrofolate interconversion. This Spodoptera frugiperda (Fall armyworm) protein is C-1-tetrahydrofolate synthase, cytoplasmic.